Reading from the N-terminus, the 149-residue chain is NPC intracellular cholesterol transporter 2 (149 aa).

The first 21 residues, 1–21 (MRLLVAAFLLLALGDLGPGGA), serve as a signal peptide directing secretion. 3 disulfides stabilise this stretch: Cys-27-Cys-140, Cys-42-Cys-47, and Cys-93-Cys-99. An N-linked (GlcNAc...) asparagine glycan is attached at Asn-58. Lys-116 carries the N6-acetyllysine modification.

Belongs to the NPC2 family. Interacts with NPC1 (via the second lumenal domain) in a cholestrol-dependent manner. Interacts with NUS1/NgBR, the interaction stabilizes NCP2 and regulates cholesterol trafficking. Interacts with DHDDS. Interacts with NEDD4L (via C2 domain). Interacts with NPC1L1. Epididymis. High levels are found in the caput and corpus regions. Weaker levels in the distal cauda and in the efferent ducts.

The protein localises to the secreted. Its subcellular location is the endoplasmic reticulum. It localises to the lysosome. The enzyme catalyses cholesterol(in) = cholesterol(out). Functionally, intracellular cholesterol transporter which acts in concert with NPC1 and plays an important role in the egress of cholesterol from the lysosomal compartment. Unesterified cholesterol that has been released from LDLs in the lumen of the late endosomes/lysosomes is transferred by NPC2 to the cholesterol-binding pocket in the N-terminal domain of NPC1. May bind and mobilize cholesterol that is associated with membranes. NPC2 binds cholesterol with a 1:1 stoichiometry. Can bind a variety of sterols, including lathosterol, desmosterol and the plant sterols stigmasterol and beta-sitosterol. The secreted form of NCP2 regulates biliary cholesterol secretion via stimulation of ABCG5/ABCG8-mediated cholesterol transport. In Canis lupus familiaris (Dog), this protein is NPC intracellular cholesterol transporter 2.